The chain runs to 279 residues: Putative Delta(7)-sterol-C5(6)-desaturase 2 (279 aa).

The next 2 helical transmembrane spans lie at 48–68 (LAGNILYFISGFLWCFYIYYL) and 127–147 (FLCFLYIALYLVLVEFMIYWV). The Fatty acid hydroxylase domain maps to 134 to 263 (ALYLVLVEFM…TIWMDWMFGS (130 aa)). Residues 148-152 (HKELH) carry the Histidine box-1 motif. The short motif at 162–166 (HATHH) is the Histidine box-2 element. A helical membrane pass occupies residues 194 to 214 (HVIALFIVPIHLITHLSLLFL). Residues 239–243 (HTIHH) carry the Histidine box-3 motif.

It belongs to the sterol desaturase family. Requires Fe cation as cofactor.

Its subcellular location is the endoplasmic reticulum membrane. It carries out the reaction a Delta(7)-sterol + 2 Fe(II)-[cytochrome b5] + O2 + 2 H(+) = a Delta(5),Delta(7)-sterol + 2 Fe(III)-[cytochrome b5] + 2 H2O. This is Putative Delta(7)-sterol-C5(6)-desaturase 2 (HDF7) from Arabidopsis thaliana (Mouse-ear cress).